A 402-amino-acid chain; its full sequence is Caspase-1 (402 aa).

The CARD domain maps to 1–91; it reads MADKILRAKR…YLAGILELQS (91 aa). The propeptide occupies 1-118; sequence MADKILRAKR…PSSSETKEEQ (118 aa). Positions 98 to 125 are disordered; it reads FVATEDSKGGHPSSSETKEEQNKEDGTF. Residues 113–123 are compositionally biased toward basic and acidic residues; the sequence is ETKEEQNKEDG. Catalysis depends on residues His236 and Cys284. Positions 297 to 314 are excised as a propeptide; the sequence is SVRDSEEDFLTDAIFEDD. Ser301 carries the phosphoserine modification. The residue at position 343 (Arg343) is an Omega-N-methylarginine.

Belongs to the peptidase C14A family. In terms of assembly, heterotetramer that consists of two anti-parallel arranged heterodimers, each one formed by a 20 kDa (Caspase-1 subunit p20) and a 10 kDa (Caspase-1 subunit p10) subunit. May be a component of the inflammasome, a protein complex which also includes PYCARD, CARD8 and NLRP2 and whose function would be the activation of pro-inflammatory caspases. Component of the AIM2 PANoptosome complex, a multiprotein complex that drives inflammatory cell death (PANoptosis). Both the p10 and p20 subunits interact with MEFV. Interacts with CARD17P/INCA and CARD18. Interacts with SERPINB1; this interaction regulates CASP1 activity. As to quaternary structure, heterotetramer that consists of two anti-parallel arranged heterodimers, each one formed by a 20 kDa (Caspase-1 subunit p20) and a 10 kDa (Caspase-1 subunit p10) subunit. Post-translationally, the two subunits are derived from the precursor sequence by an autocatalytic mechanism. Ubiquitinated via 'Lys-11'-linked polyubiquitination. Deubiquitinated by USP8. In terms of tissue distribution, high level expression seen in spleen and lung, low level expression seen in brain, heart, liver, kidney, testis and skeletal muscle.

It localises to the cytoplasm. It is found in the cell membrane. It carries out the reaction Strict requirement for an Asp residue at position P1 and has a preferred cleavage sequence of Tyr-Val-Ala-Asp-|-.. Thiol protease involved in a variety of inflammatory processes by proteolytically cleaving other proteins, such as the precursors of the inflammatory cytokines interleukin-1 beta (IL1B) and interleukin 18 (IL18) as well as the pyroptosis inducer Gasdermin-D (GSDMD), into active mature peptides. Plays a key role in cell immunity as an inflammatory response initiator: once activated through formation of an inflammasome complex, it initiates a pro-inflammatory response through the cleavage of the two inflammatory cytokines IL1B and IL18, releasing the mature cytokines which are involved in a variety of inflammatory processes. Cleaves a tetrapeptide after an Asp residue at position P1. Also initiates pyroptosis, a programmed lytic cell death pathway, through cleavage of GSDMD. In contrast to cleavage of interleukin IL1B, recognition and cleavage of GSDMD is not strictly dependent on the consensus cleavage site but depends on an exosite interface on CASP1 that recognizes and binds the Gasdermin-D, C-terminal (GSDMD-CT) part. Cleaves and activates CASP7 in response to bacterial infection, promoting plasma membrane repair. Upon inflammasome activation, during DNA virus infection but not RNA virus challenge, controls antiviral immunity through the cleavage of CGAS, rendering it inactive. In apoptotic cells, cleaves SPHK2 which is released from cells and remains enzymatically active extracellularly. The chain is Caspase-1 (Casp1) from Mus musculus (Mouse).